The primary structure comprises 569 residues: MLCVMMLLFSAIASFPVSAQAKDQDAGILIIYSTLDGKESSQVKMLDLLAGHFTSHVTVKKDSDVEASDFKGKDHVIYYGQTKRKLSQKLLSLISGVKKPVVAIGYNAGQISQFSGLSLARKENVFQVHSRSEKADVSLESGLNVLSVSGLKGTALYTFKADEGTTHSFIWKTKKGNVYIGLTNLLNDNLIVAKQLREAFGEKAGTTLLYLRLEDISPMSDEKLLLQAGTYLHKRHIPFILAVIPVYLNPETGDKVYLSNQPKMVKVLKKLQSMGGSIIVHGYTHAYRYSETGEGFEFWDAKADQPITSGNAEDPPSILEKEQDFPNEQAYHSYLEPFREKEETYTKQKLTRAIEDLTSSGLYPLAFEAPHYTMSEYGYQIASQYFTSIFGQVQLSSTTWKTSGAPPFVTAPSMLHGMTLYPETIGFVDTSKQNPLGEMEEHISQMIDFEGGVAGGFYHPYLGMKYLPELVDQMERIPDSEWLDLKKTKQTVKTDKVEIHTSGDGTIQVKNGVSPIYEFFDHHRQTPLEKALWILSAVVLLFVIMFVSYTFYLRATLKKRIFKERRSLG.

The signal sequence occupies residues 1-21 (MLCVMMLLFSAIASFPVSAQA). Over 22–530 (KDQDAGILII…DHHRQTPLEK (509 aa)) the chain is Extracellular. A helical transmembrane segment spans residues 531 to 551 (ALWILSAVVLLFVIMFVSYTF). Residues 552 to 569 (YLRATLKKRIFKERRSLG) are Cytoplasmic-facing.

The protein resides in the cell membrane. This is an uncharacterized protein from Bacillus subtilis (strain 168).